The following is a 453-amino-acid chain: MPFIPHTEEDVAEMLTSIGARSIDELFDEIPAELKTGKLTQVPPGLSEMEISRLMYERAQQDGFYLSFIGAGAYEHHIPAAVWQITTRGEFYSSYTPYQAEASQGTLQLLYEYQTMMASLAGMDVSNASLYDGASALAEAALMAVRQHRTSRRILVPQTVHPVYRSVMRTIVRNQAIEVVEVPYDPATGQVAIDKLDQFAQEEFAALIIPQPNFFGVLEQVDALTDWAHDKQSLAVAVVNPTSLAMLKPPGEWGRRGADIAVGEGQPLGIPLSSGGPYFGFMTCKQELVRQMPGRIIGRTTDLEGKEGFALTLQAREQHIRRSKATSNICTNQGLMVTAATIYMSLLGPEGLYRVAAHSHANTVALVEQLEKLPGVKKAFHSPFFHEAALQLSVPADKVLNRLKAQGVLGGVLLENHYPDLKNTLLVCATETKTAEDLDKYTEVLRQALAASA.

Belongs to the GcvP family. N-terminal subunit subfamily. As to quaternary structure, the glycine cleavage system is composed of four proteins: P, T, L and H. In this organism, the P 'protein' is a heterodimer of two subunits.

The catalysed reaction is N(6)-[(R)-lipoyl]-L-lysyl-[glycine-cleavage complex H protein] + glycine + H(+) = N(6)-[(R)-S(8)-aminomethyldihydrolipoyl]-L-lysyl-[glycine-cleavage complex H protein] + CO2. Functionally, the glycine cleavage system catalyzes the degradation of glycine. The P protein binds the alpha-amino group of glycine through its pyridoxal phosphate cofactor; CO(2) is released and the remaining methylamine moiety is then transferred to the lipoamide cofactor of the H protein. This is Probable glycine dehydrogenase (decarboxylating) subunit 1 from Nitrosomonas europaea (strain ATCC 19718 / CIP 103999 / KCTC 2705 / NBRC 14298).